The sequence spans 250 residues: DNA polymerase sliding clamp (250 aa).

Belongs to the PCNA family. As to quaternary structure, homotrimer. The subunits circularize to form a toroid; DNA passes through its center. Replication factor C (RFC) is required to load the toroid on the DNA.

Sliding clamp subunit that acts as a moving platform for DNA processing. Responsible for tethering the catalytic subunit of DNA polymerase and other proteins to DNA during high-speed replication. The polypeptide is DNA polymerase sliding clamp (Methanococcus maripaludis (strain C6 / ATCC BAA-1332)).